We begin with the raw amino-acid sequence, 234 residues long: Leucyl/phenylalanyl-tRNA--protein transferase (234 aa).

Belongs to the L/F-transferase family.

The protein resides in the cytoplasm. The enzyme catalyses N-terminal L-lysyl-[protein] + L-leucyl-tRNA(Leu) = N-terminal L-leucyl-L-lysyl-[protein] + tRNA(Leu) + H(+). It carries out the reaction N-terminal L-arginyl-[protein] + L-leucyl-tRNA(Leu) = N-terminal L-leucyl-L-arginyl-[protein] + tRNA(Leu) + H(+). It catalyses the reaction L-phenylalanyl-tRNA(Phe) + an N-terminal L-alpha-aminoacyl-[protein] = an N-terminal L-phenylalanyl-L-alpha-aminoacyl-[protein] + tRNA(Phe). Functionally, functions in the N-end rule pathway of protein degradation where it conjugates Leu, Phe and, less efficiently, Met from aminoacyl-tRNAs to the N-termini of proteins containing an N-terminal arginine or lysine. The protein is Leucyl/phenylalanyl-tRNA--protein transferase of Hahella chejuensis (strain KCTC 2396).